We begin with the raw amino-acid sequence, 418 residues long: BTB and MATH domain-containing protein 41 (418 aa).

The tract at residues 1 to 33 (MEINNGAQPENAAVSIPSRSPSGKSEKRKSPSI) is disordered. The region spanning 45–173 (SFTNYWSVER…NDILTIGCEL (129 aa)) is the MATH domain. A BTB domain is found at 232–293 (SDFIIVASCG…TLDVLLRHMY (62 aa)).

As to quaternary structure, interacts with cul-3.

It functions in the pathway protein modification; protein ubiquitination. Its function is as follows. Probable substrate-specific adapter of an E3 ubiquitin-protein ligase complex which mediates the ubiquitination and subsequent proteasomal degradation of target proteins. This Caenorhabditis elegans protein is BTB and MATH domain-containing protein 41 (bath-41).